A 748-amino-acid chain; its full sequence is Catalase-peroxidase (748 aa).

A cross-link (tryptophyl-tyrosyl-methioninium (Trp-Tyr) (with M-268)) is located at residues 91-242 (WHSAGTYRIG…LAAVQMGLIY (152 aa)). Histidine 92 functions as the Proton acceptor in the catalytic mechanism. The segment at 194–223 (DRYGKGKGSSSQGEIPADAHRHGQEQARTA) is disordered. A cross-link (tryptophyl-tyrosyl-methioninium (Tyr-Met) (with W-91)) is located at residues 242 to 268 (YVNPEGPEGNPDPLAAAHDIRETFARM). Heme b is bound at residue histidine 283. Residues 288-310 (THGAGDAKHVGREPEGEDMDSQG) are disordered. Basic and acidic residues predominate over residues 290-301 (GAGDAKHVGREP).

This sequence belongs to the peroxidase family. Peroxidase/catalase subfamily. Homodimer or homotetramer. Heme b is required as a cofactor. In terms of processing, formation of the three residue Trp-Tyr-Met cross-link is important for the catalase, but not the peroxidase activity of the enzyme.

The catalysed reaction is H2O2 + AH2 = A + 2 H2O. It carries out the reaction 2 H2O2 = O2 + 2 H2O. In terms of biological role, bifunctional enzyme with both catalase and broad-spectrum peroxidase activity. This Herbaspirillum seropedicae protein is Catalase-peroxidase.